We begin with the raw amino-acid sequence, 288 residues long: Beta-lactamase PSE-1 (288 aa).

A signal peptide spans 1–17 (MKFLLAFSLLIPSVVFA). Serine 65 (acyl-ester intermediate) is an active-site residue. Cysteines 72 and 118 form a disulfide. 229-231 (RSG) contributes to the substrate binding site.

The protein belongs to the class-A beta-lactamase family. In terms of assembly, monomer.

It carries out the reaction a beta-lactam + H2O = a substituted beta-amino acid. Inhibited by p-chloromercuribenzoate but not by cloxacillin. Hydrolyzes penicillin, ampicillin and carbenicillin but not other antibiotics including oxacillin, methicillin and cloxacillin. The chain is Beta-lactamase PSE-1 from Pseudomonas aeruginosa.